The sequence spans 202 residues: Recombination protein RecR (202 aa).

The C4-type zinc-finger motif lies at C56–C71. A Toprim domain is found at T79–P179.

It belongs to the RecR family.

Functionally, may play a role in DNA repair. It seems to be involved in an RecBC-independent recombinational process of DNA repair. It may act with RecF and RecO. The polypeptide is Recombination protein RecR (Rhodococcus jostii (strain RHA1)).